A 133-amino-acid polypeptide reads, in one-letter code: ATP synthase epsilon chain (133 aa).

Residues 103–133 are disordered; sequence VSQMEGQEPSTEKIKAQQNFNRARARVQATK.

This sequence belongs to the ATPase epsilon chain family. In terms of assembly, F-type ATPases have 2 components, CF(1) - the catalytic core - and CF(0) - the membrane proton channel. CF(1) has five subunits: alpha(3), beta(3), gamma(1), delta(1), epsilon(1). CF(0) has three main subunits: a, b and c.

It is found in the cellular thylakoid membrane. In terms of biological role, produces ATP from ADP in the presence of a proton gradient across the membrane. The protein is ATP synthase epsilon chain of Prochlorococcus marinus (strain MIT 9313).